Reading from the N-terminus, the 61-residue chain is Probradykinin-1 (61 aa).

The N-terminal stretch at 1-22 is a signal peptide; the sequence is MSFLKKSLFLVLFLGLVSFSIC. Positions 23–48 are excised as a propeptide; sequence EEEKRETEEEENKDETEEQSEEKKRF. A disordered region spans residues 24 to 61; the sequence is EEKRETEEEENKDETEEQSEEKKRFEPVPPGFTPFRLT. The segment covering 30–42 has biased composition (acidic residues); it reads EEEENKDETEEQS.

It belongs to the frog skin active peptide (FSAP) family. Bradykinin-related peptide subfamily. Expressed by the skin glands.

It localises to the secreted. May produce in vitro relaxation of rat arterial smooth muscle and constriction of intestinal smooth muscle. May target bradykinin receptors (BDKRB). This Pithecopus azureus (Orange-legged monkey tree frog) protein is Probradykinin-1.